We begin with the raw amino-acid sequence, 790 residues long: LPS-assembly protein LptD (790 aa).

The signal sequence occupies residues M1–A20.

The protein belongs to the LptD family. Component of the lipopolysaccharide transport and assembly complex. Interacts with LptE and LptA.

The protein resides in the cell outer membrane. In terms of biological role, together with LptE, is involved in the assembly of lipopolysaccharide (LPS) at the surface of the outer membrane. This chain is LPS-assembly protein LptD, found in Bordetella bronchiseptica (strain ATCC BAA-588 / NCTC 13252 / RB50) (Alcaligenes bronchisepticus).